A 386-amino-acid polypeptide reads, in one-letter code: N-acetylneuraminate epimerase (386 aa).

An N-terminal signal peptide occupies residues methionine 1–alanine 29. Kelch repeat units follow at residues valine 51–asparagine 95, glutamate 97–asparagine 149, threonine 151–tyrosine 186, asparagine 187–asparagine 232, leucine 235–alanine 284, glutamine 306–aspartate 355, and isoleucine 357–glutamate 386. Glutamate 241 serves as the catalytic Proton acceptor.

Belongs to the NanM family. As to quaternary structure, homodimer.

The protein localises to the periplasm. It catalyses the reaction N-acetyl-alpha-neuraminate = N-acetyl-beta-neuraminate. Functionally, converts alpha-N-acetylneuranimic acid (Neu5Ac) to the beta-anomer, accelerating the equilibrium between the alpha- and beta-anomers. Probably facilitates sialidase-negative bacteria to compete successfully for limited amounts of extracellular Neu5Ac, which is likely taken up in the beta-anomer. In addition, the rapid removal of sialic acid from solution might be advantageous to the bacterium to damp down host responses. The chain is N-acetylneuraminate epimerase from Salmonella arizonae (strain ATCC BAA-731 / CDC346-86 / RSK2980).